The chain runs to 794 residues: Zinc finger protein 148 (794 aa).

Lys-6 is covalently cross-linked (Glycyl lysine isopeptide (Lys-Gly) (interchain with G-Cter in SUMO2)). Residue Ser-51 is modified to Phosphoserine. Glycyl lysine isopeptide (Lys-Gly) (interchain with G-Cter in SUMO2) cross-links involve residues Lys-88, Lys-115, and Lys-132. The C2H2-type 1 zinc-finger motif lies at 171-193; sequence HVCEHCNAAFRTNYHLQRHVFIH. Position 194 is a phosphothreonine (Thr-194). 2 C2H2-type zinc fingers span residues 199 to 221 and 227 to 249; these read FQCS…EKIH and FRCD…KRTH. Ser-250 carries the post-translational modification Phosphoserine. The segment at 255–278 adopts a C2H2-type 4 zinc-finger fold; that stretch reads YQCEYCLQYFSRTDRVLKHKRMCH. Lys-291 is covalently cross-linked (Glycyl lysine isopeptide (Lys-Gly) (interchain with G-Cter in SUMO2)). Residues 298 to 336 are disordered; it reads EEDSGFSTSPKDNSLPKKKRQKTEKKSSGMDKESALDKS. Phosphoserine occurs at positions 301 and 306. Lys-308 is covalently cross-linked (Glycyl lysine isopeptide (Lys-Gly) (interchain with G-Cter in SUMO2)). The segment covering 321–336 has biased composition (basic and acidic residues); that stretch reads EKKSSGMDKESALDKS. A Glycyl lysine isopeptide (Lys-Gly) (interchain with G-Cter in SUMO1); alternate cross-link involves residue Lys-356. Residue Lys-356 forms a Glycyl lysine isopeptide (Lys-Gly) (interchain with G-Cter in SUMO2); alternate linkage. Lys-402 is covalently cross-linked (Glycyl lysine isopeptide (Lys-Gly) (interchain with G-Cter in SUMO2)). Ser-412 bears the Phosphoserine mark. Residues Lys-421 and Lys-424 each participate in a glycyl lysine isopeptide (Lys-Gly) (interchain with G-Cter in SUMO2) cross-link. Over residues 574–588 the composition is skewed to polar residues; that stretch reads NSSEVPEVTPSENVG. Residues 574-596 are disordered; that stretch reads NSSEVPEVTPSENVGSSSQASSS. At Lys-607 the chain carries N6-acetyllysine. Residues Ser-665 and Ser-784 each carry the phosphoserine modification.

This sequence belongs to the krueppel C2H2-type zinc-finger protein family. Interacts with HNRNPDL. Interacts with the 5FMC complex; the interaction requires association with CHTOP. Interacts with CAVIN1. Post-translationally, sumoylated with SUMO2. Desumoylated by SENP3, resulting in the stimulation of transcription of its target genes.

The protein resides in the nucleus. In terms of biological role, involved in transcriptional regulation. Represses the transcription of a number of genes including gastrin, stromelysin and enolase. Binds to the G-rich box in the enhancer region of these genes. The protein is Zinc finger protein 148 (ZNF148) of Homo sapiens (Human).